Here is a 466-residue protein sequence, read N- to C-terminus: Cysteine--tRNA ligase (466 aa).

C27 lines the Zn(2+) pocket. The short motif at 29-39 is the 'HIGH' region element; that stretch reads PTVYDLAHIGN. Zn(2+) contacts are provided by C211, H236, and E240. The 'KMSKS' region signature appears at 270–274; the sequence is KMSKS. Residue K273 coordinates ATP.

It belongs to the class-I aminoacyl-tRNA synthetase family. Monomer. It depends on Zn(2+) as a cofactor.

The protein localises to the cytoplasm. The enzyme catalyses tRNA(Cys) + L-cysteine + ATP = L-cysteinyl-tRNA(Cys) + AMP + diphosphate. The chain is Cysteine--tRNA ligase from Anaplasma marginale (strain St. Maries).